The sequence spans 757 residues: Transferrin receptor protein 1 (757 aa).

The Cytoplasmic segment spans residues 1 to 67 (MMDQARSAIS…KHRRLNGRLC (67 aa)). The interval 1–67 (MMDQARSAIS…KHRRLNGRLC (67 aa)) is mediates interaction with SH3BP4. A phosphoserine mark is found at S10 and S19. A Phosphotyrosine modification is found at Y20. The Endocytosis signal motif lies at 20–23 (YTRF). At T21 the chain carries Phosphothreonine. At S24 the chain carries Phosphoserine. Positions 58 to 61 (KHRR) match the Stop-transfer sequence motif. C67 carries S-palmitoyl cysteine lipidation. The helical; Signal-anchor for type II membrane protein transmembrane segment at 68-88 (FGTIAVVIFFLIGFMIGYLGY) threads the bilayer. Residues 89–757 (CKRTEQKDCV…GDIWDIDNEF (669 aa)) are Extracellular-facing. An O-linked (GalNAc...) threonine glycan is attached at T103. In terms of domain architecture, PA spans 220-310 (SKATTVSGKL…GTGDPYTPGF (91 aa)). N248 and N314 each carry an N-linked (GlcNAc...) asparagine glycan. A ligand-binding region spans residues 566–757 (NLDTYEKLIQ…GDIWDIDNEF (192 aa)). The Cell attachment site signature appears at 643–645 (RGD). N-linked (GlcNAc...) asparagine glycosylation is found at N719 and N724.

It belongs to the peptidase M28 family. M28B subfamily. In terms of assembly, homodimer; disulfide-linked. Binds one transferrin molecule per subunit. Interacts with SH3BP4. Interacts with STEAP3; facilitates TFRC endocytosis in erythroid precursor cells. Post-translationally, stearoylated by ZDHHC6 which inhibits TFRC-mediated activation of the JNK pathway and promotes mitochondrial fragmentation. Stearoylation does not affect iron uptake. In terms of processing, N- and O-glycosylated, phosphorylated and palmitoylated.

The protein resides in the cell membrane. Its subcellular location is the melanosome. In terms of biological role, cellular uptake of iron occurs via receptor-mediated endocytosis of ligand-occupied transferrin receptor into specialized endosomes. Endosomal acidification leads to iron release. The apotransferrin-receptor complex is then recycled to the cell surface with a return to neutral pH and the concomitant loss of affinity of apotransferrin for its receptor. Transferrin receptor is necessary for development of erythrocytes and the nervous system. Positively regulates T and B cell proliferation through iron uptake. Acts as a lipid sensor that regulates mitochondrial fusion by regulating activation of the JNK pathway. When dietary levels of stearate (C18:0) are low, promotes activation of the JNK pathway, resulting in HUWE1-mediated ubiquitination and subsequent degradation of the mitofusin MFN2 and inhibition of mitochondrial fusion. When dietary levels of stearate (C18:0) are high, TFRC stearoylation inhibits activation of the JNK pathway and thus degradation of the mitofusin MFN2. Mediates uptake of NICOL1 into fibroblasts where it may regulate extracellular matrix production. This chain is Transferrin receptor protein 1 (TFRC), found in Cricetulus griseus (Chinese hamster).